The chain runs to 410 residues: Arginine deiminase (410 aa).

Residue cysteine 398 is the Amidino-cysteine intermediate of the active site.

Belongs to the arginine deiminase family. Homodimer.

It localises to the cytoplasm. It catalyses the reaction L-arginine + H2O = L-citrulline + NH4(+). Its pathway is amino-acid degradation; L-arginine degradation via ADI pathway; carbamoyl phosphate from L-arginine: step 1/2. The protein is Arginine deiminase (arcA) of Mycoplasmopsis arginini (Mycoplasma arginini).